The chain runs to 364 residues: Histidinol-phosphate aminotransferase (364 aa).

The interval 1 to 46 (MQPRDLSDHSPYVPGRGVEEVARDRGLDPDDLIKLSSNENPHGPSP) is disordered. Residues 17–33 (GVEEVARDRGLDPDDLI) show a composition bias toward basic and acidic residues. Residue lysine 222 is modified to N6-(pyridoxal phosphate)lysine.

This sequence belongs to the class-II pyridoxal-phosphate-dependent aminotransferase family. Histidinol-phosphate aminotransferase subfamily. Pyridoxal 5'-phosphate is required as a cofactor.

It catalyses the reaction L-histidinol phosphate + 2-oxoglutarate = 3-(imidazol-4-yl)-2-oxopropyl phosphate + L-glutamate. It participates in amino-acid biosynthesis; L-histidine biosynthesis; L-histidine from 5-phospho-alpha-D-ribose 1-diphosphate: step 7/9. This chain is Histidinol-phosphate aminotransferase, found in Halorubrum lacusprofundi (strain ATCC 49239 / DSM 5036 / JCM 8891 / ACAM 34).